The following is a 265-amino-acid chain: Glutamate 5-kinase (265 aa).

Position 15 (Lys15) interacts with ATP. Residues Ser55, Asp142, and Asn158 each coordinate substrate. Residues 178–179 and 220–226 contribute to the ATP site; these read SD and TGGMVTK.

It belongs to the glutamate 5-kinase family.

It is found in the cytoplasm. The catalysed reaction is L-glutamate + ATP = L-glutamyl 5-phosphate + ADP. It functions in the pathway amino-acid biosynthesis; L-proline biosynthesis; L-glutamate 5-semialdehyde from L-glutamate: step 1/2. Catalyzes the transfer of a phosphate group to glutamate to form L-glutamate 5-phosphate. The polypeptide is Glutamate 5-kinase (Lactiplantibacillus plantarum (strain ATCC BAA-793 / NCIMB 8826 / WCFS1) (Lactobacillus plantarum)).